The following is a 168-amino-acid chain: MPRSRINGNFIDKTSSIVANILLRIIPTTSGEKEAFTYYRDGMSAQSEGNYAEALQNYYEATRPEIDPYDRSYILYNIGLIHTSNGEHTKALEYYFRALERNPFLPQAFNNMAVICHYRGEQAIRQGDSEIAEAWSDQAAEYWKQAIALTPGNYIEAHNWLKITRRFE.

TPR repeat units follow at residues 35–68, 72–105, and 120–153; these read AFTY…EIDP, SYIL…NPFL, and GEQA…TPGN.

It belongs to the Ycf3 family.

Its subcellular location is the plastid. It localises to the chloroplast thylakoid membrane. In terms of biological role, essential for the assembly of the photosystem I (PSI) complex. May act as a chaperone-like factor to guide the assembly of the PSI subunits. In Liriodendron tulipifera (Tuliptree), this protein is Photosystem I assembly protein Ycf3.